The chain runs to 1092 residues: MMDYFNELERETERLYEIARKARARGLDVSTTPEIPLAKDLAERVEGLVGPEGIARRIKELEGDRGREEVAFQIAAEIASQAVPDDDPEEREKLADQALRTALAILTEGVVAAPLEGIARVRIKENFDKSRYLAVYFAGPIRSAGGTAAALSVLIADYIRLAVGLDRYKPVEREIERYVEEVELYESEVTNLQYSPKPDEVRLAASKIPVEVTGEPTDKVEVSHRDLERVETNNIRGGALLAMVEGVIQKAPKVLKYAKQLKLEGWDWLEKFSKAPKKGEGEEKVVVKADSKYVEDIIGGRPVLAYPSEKGAFRLRYGRARNTGLAAMGVHPATMELLQFLAVGTQMKIERPGKGNCVVPVDTIDGPVVKLRNGDVIRIEDAETASRVRSEVEEILFLGDMLVAFGEFLRNNHVLMPAGWCEEWWIQTILSSPKYPGDDPLNLSYYRTRWNELEVSAGDAFRISEEYDVPLHPRYTYFYHDVTVRELNMLREWLNTSQLEDELVLELRPEKRILEILGVPHRVKDSRVVIGHDDAHALIKTLRKPLEDSSDTVEALNRVSPVRIMKKAPTYIGTRVGRPEKTKERKMRPAPHVLFPIGKYGGSRRNIPDAAKKGSITVEIGRATCPSCRVSSMQSICPSCGSRTVIGEPGKRNINLAALLKRAAENVSVRKLDEIKGVEGMISAEKFPEPLEKGILRAKNDVYTFKDATIRHDSTDLPLTHFTPREVGVSVERLRELGYTRDCYGDELEDEDQILELRVQDVVISEDCADYLVRVANFVDDLLERFYDLERFYNVKTREDLVGHLIAGLAPHTSAAVLGRIIGFTGASACYAHPYFHSAKRRNCDSDEDSVMLLLDALLNFSKSYLPSSRGGSMDAPLVLSTRIDPEEIDDESHNIDTMDMIPLEVYERSFDHPRPSEVLDVIDNVEKRLGKPEQYTGLMFSHNTSRIDEGPKVCLYKLLPTMKEKVESQITLAEKIRAVDQRSVVEGVLMSHFLPDMMGNIRAFSRQKVRCTKCNRKYRRIPLSGECRCGGNLVLTVSKGSVIKYLEISKELASRYPIDPYLMQRIEILEYGVNSLFESDRSKQSSLDVFL.

Belongs to the archaeal DNA polymerase II family. Heterodimer of a large subunit and a small subunit.

The enzyme catalyses DNA(n) + a 2'-deoxyribonucleoside 5'-triphosphate = DNA(n+1) + diphosphate. It carries out the reaction Exonucleolytic cleavage in the 3'- to 5'-direction to yield nucleoside 5'-phosphates.. In terms of biological role, possesses two activities: a DNA synthesis (polymerase) and an exonucleolytic activity that degrades single-stranded DNA in the 3'- to 5'-direction. Has a template-primer preference which is characteristic of a replicative DNA polymerase. The sequence is that of DNA polymerase II large subunit (polC) from Methanothermobacter thermautotrophicus (strain ATCC 29096 / DSM 1053 / JCM 10044 / NBRC 100330 / Delta H) (Methanobacterium thermoautotrophicum).